The following is a 154-amino-acid chain: uncharacterized protein (154 aa).

The protein resides in the mitochondrion. This is an uncharacterized protein from Vicia faba (Broad bean).